We begin with the raw amino-acid sequence, 227 residues long: ATP synthase F(0) complex subunit a (227 aa).

6 helical membrane passes run 14 to 34 (LLGH…FPSP), 69 to 89 (WALM…LGLL), 98 to 118 (QLSM…LTGL), 139 to 159 (IPAL…ALGV), 167 to 187 (AGHL…PILP), and 190 to 210 (SILT…VAMI).

This sequence belongs to the ATPase A chain family. In terms of assembly, component of the ATP synthase complex composed at least of ATP5F1A/subunit alpha, ATP5F1B/subunit beta, ATP5MC1/subunit c (homooctomer), MT-ATP6/subunit a, MT-ATP8/subunit 8, ATP5ME/subunit e, ATP5MF/subunit f, ATP5MG/subunit g, ATP5MK/subunit k, ATP5MJ/subunit j, ATP5F1C/subunit gamma, ATP5F1D/subunit delta, ATP5F1E/subunit epsilon, ATP5PF/subunit F6, ATP5PB/subunit b, ATP5PD/subunit d, ATP5PO/subunit OSCP. ATP synthase complex consists of a soluble F(1) head domain (subunits alpha(3) and beta(3)) - the catalytic core - and a membrane F(0) domain - the membrane proton channel (subunits c, a, 8, e, f, g, k and j). These two domains are linked by a central stalk (subunits gamma, delta, and epsilon) rotating inside the F1 region and a stationary peripheral stalk (subunits F6, b, d, and OSCP). Interacts with DNAJC30; interaction is direct.

It localises to the mitochondrion inner membrane. It carries out the reaction H(+)(in) = H(+)(out). Its function is as follows. Subunit a, of the mitochondrial membrane ATP synthase complex (F(1)F(0) ATP synthase or Complex V) that produces ATP from ADP in the presence of a proton gradient across the membrane which is generated by electron transport complexes of the respiratory chain. ATP synthase complex consist of a soluble F(1) head domain - the catalytic core - and a membrane F(1) domain - the membrane proton channel. These two domains are linked by a central stalk rotating inside the F(1) region and a stationary peripheral stalk. During catalysis, ATP synthesis in the catalytic domain of F(1) is coupled via a rotary mechanism of the central stalk subunits to proton translocation. With the subunit c (ATP5MC1), forms the proton-conducting channel in the F(0) domain, that contains two crucial half-channels (inlet and outlet) that facilitate proton movement from the mitochondrial intermembrane space (IMS) into the matrix. Protons are taken up via the inlet half-channel and released through the outlet half-channel, following a Grotthuss mechanism. The protein is ATP synthase F(0) complex subunit a of Anas platyrhynchos (Mallard).